A 581-amino-acid polypeptide reads, in one-letter code: Sabinene synthase 1, chloroplastic (581 aa).

A chloroplast-targeting transit peptide spans methionine 1–leucine 28. (2E)-geranyl diphosphate contacts are provided by arginine 297, aspartate 334, aspartate 338, arginine 475, and aspartate 478. Positions 334 and 338 each coordinate Mg(2+). The DDXXD motif signature appears at aspartate 334–aspartate 338. 3 residues coordinate Mg(2+): aspartate 478, threonine 482, and glutamate 486.

It belongs to the terpene synthase family. Tpsb subfamily. The cofactor is Mg(2+). Requires Mn(2+) as cofactor.

The protein localises to the plastid. It is found in the chloroplast. The catalysed reaction is (2E)-geranyl diphosphate = sabinene + diphosphate. It carries out the reaction (2E)-geranyl diphosphate = beta-myrcene + diphosphate. It functions in the pathway secondary metabolite biosynthesis; terpenoid biosynthesis. Functionally, monoterpene synthase (TPS) involved in the biosynthesis of monoterpene natural products, components of the chemical defense arsenal. Catalyzes the conversion of (2E)-geranyl diphosphate (GPP) into sabinene, and, as minor products, myrcene. The polypeptide is Sabinene synthase 1, chloroplastic (Salvia pomifera (Apple sage)).